The following is a 579-amino-acid chain: Transcription factor COE2 (579 aa).

The segment at 63 to 66 (RKSN) is interaction with DNA. The segment at 149 to 168 (CRVLLTHEVMCSRCCEKKSC) adopts a C5-type zinc-finger fold. Interaction with DNA stretches follow at residues 195 to 202 (NCLKTAGN) and 234 to 237 (NNSK). The IPT/TIG domain maps to 260-343 (PCIKAISPSE…KGAPGRFIYT (84 aa)). 3 disordered regions span residues 442-482 (GVSI…YGSN), 514-533 (AIMP…LPFS), and 549-579 (LRPQ…VPPM). Polar residues predominate over residues 449–459 (GQTSGQGYTRN). Composition is skewed to low complexity over residues 460 to 472 (SSSL…PSSS) and 521 to 533 (PGSS…LPFS).

The protein belongs to the COE family.

It is found in the nucleus. The polypeptide is Transcription factor COE2 (coe2) (Danio rerio (Zebrafish)).